The chain runs to 246 residues: Predicted GPI-anchored protein 33 (246 aa).

Positions 1–16 (MRGIILLSFVLTSCLA) are cleaved as a signal peptide. Asn-214 carries an N-linked (GlcNAc...) asparagine glycan. The GPI-anchor amidated asparagine moiety is linked to residue Asn-219. The propeptide at 220–246 (AAGVYSTNSVLVFVSICIGFIGGSLGI) is removed in mature form.

It is found in the cell membrane. This chain is Predicted GPI-anchored protein 33 (PGA33), found in Candida albicans (strain SC5314 / ATCC MYA-2876) (Yeast).